We begin with the raw amino-acid sequence, 305 residues long: J domain-containing protein 1 (305 aa).

Residues 91–163 enclose the J domain; sequence TPYEVLGLVK…SRRRMYDMYA (73 aa). A helical membrane pass occupies residues 212–232; the sequence is WGMVVWALCMLAGFQVMAFLI.

This sequence belongs to the DnaJ family.

Its subcellular location is the mitochondrion membrane. In terms of biological role, probable chaperone. The protein is J domain-containing protein 1 (JID1) of Eremothecium gossypii (strain ATCC 10895 / CBS 109.51 / FGSC 9923 / NRRL Y-1056) (Yeast).